Here is a 155-residue protein sequence, read N- to C-terminus: SsrA-binding protein (155 aa).

The protein belongs to the SmpB family.

Its subcellular location is the cytoplasm. Its function is as follows. Required for rescue of stalled ribosomes mediated by trans-translation. Binds to transfer-messenger RNA (tmRNA), required for stable association of tmRNA with ribosomes. tmRNA and SmpB together mimic tRNA shape, replacing the anticodon stem-loop with SmpB. tmRNA is encoded by the ssrA gene; the 2 termini fold to resemble tRNA(Ala) and it encodes a 'tag peptide', a short internal open reading frame. During trans-translation Ala-aminoacylated tmRNA acts like a tRNA, entering the A-site of stalled ribosomes, displacing the stalled mRNA. The ribosome then switches to translate the ORF on the tmRNA; the nascent peptide is terminated with the 'tag peptide' encoded by the tmRNA and targeted for degradation. The ribosome is freed to recommence translation, which seems to be the essential function of trans-translation. In Bacillus cereus (strain B4264), this protein is SsrA-binding protein.